A 169-amino-acid polypeptide reads, in one-letter code: Probable glutathione peroxidase 2 (169 aa).

C41 is an active-site residue.

It belongs to the glutathione peroxidase family. As to quaternary structure, interacts with DJ1A. As to expression, expressed in leaves, stems, flowers, green siliques and roots.

The protein localises to the cytoplasm. It is found in the cytosol. The protein resides in the nucleus. The catalysed reaction is 2 glutathione + H2O2 = glutathione disulfide + 2 H2O. Functionally, may constitute a glutathione peroxidase-like protective system against oxidative stresses. In Arabidopsis thaliana (Mouse-ear cress), this protein is Probable glutathione peroxidase 2 (GPX2).